A 498-amino-acid chain; its full sequence is ATP synthase subunit beta, chloroplastic (498 aa).

172-179 contacts ATP; it reads GGAGVGKT.

It belongs to the ATPase alpha/beta chains family. In terms of assembly, F-type ATPases have 2 components, CF(1) - the catalytic core - and CF(0) - the membrane proton channel. CF(1) has five subunits: alpha(3), beta(3), gamma(1), delta(1), epsilon(1). CF(0) has four main subunits: a(1), b(1), b'(1) and c(9-12).

It localises to the plastid. The protein resides in the chloroplast thylakoid membrane. The catalysed reaction is ATP + H2O + 4 H(+)(in) = ADP + phosphate + 5 H(+)(out). In terms of biological role, produces ATP from ADP in the presence of a proton gradient across the membrane. The catalytic sites are hosted primarily by the beta subunits. The polypeptide is ATP synthase subunit beta, chloroplastic (Gossypium hirsutum (Upland cotton)).